An 85-amino-acid chain; its full sequence is Cytochrome b (85 aa).

Transmembrane regions (helical) follow at residues 1–8, 32–53, and 68–85; these read LTGLFLAM, WLIRNIHANGASFFFICIYLHI, and WNVGVVLLLLVMMTAFVG. Heme b-binding residues include H38 and H52.

This sequence belongs to the cytochrome b family. The cytochrome bc1 complex contains 3 respiratory subunits (MT-CYB, CYC1 and UQCRFS1), 2 core proteins (UQCRC1 and UQCRC2) and probably 6 low-molecular weight proteins. Heme b is required as a cofactor.

It is found in the mitochondrion inner membrane. Component of the ubiquinol-cytochrome c reductase complex (complex III or cytochrome b-c1 complex) that is part of the mitochondrial respiratory chain. The b-c1 complex mediates electron transfer from ubiquinol to cytochrome c. Contributes to the generation of a proton gradient across the mitochondrial membrane that is then used for ATP synthesis. In Pomoxis nigromaculatus (Black crappie), this protein is Cytochrome b (mt-cyb).